The primary structure comprises 226 residues: uncharacterized protein (226 aa).

4 helical membrane-spanning segments follow: residues 25–45 (ALAW…IFLI), 54–74 (FLLF…YFIF), 107–127 (ELFL…YFFI), and 153–173 (TITI…CFSS).

Its subcellular location is the cell membrane. This is an uncharacterized protein from Mycoplasma genitalium (strain ATCC 33530 / DSM 19775 / NCTC 10195 / G37) (Mycoplasmoides genitalium).